The primary structure comprises 176 residues: CASP-like protein 5A1 (176 aa).

The Cytoplasmic portion of the chain corresponds to 1–45 (MDASHPAVYPVGVPPTAVDPPPRVRMKDYEGMPSTLGGLVLRSGQ). Residues 46 to 66 (FACAVTALSIMISIPDFSSVT) form a helical membrane-spanning segment. Position 67 (Ala67) is a topological domain, extracellular. Residues 68–88 (FCYLVAAMALQLLWSVSLAVV) traverse the membrane as a helical segment. The Cytoplasmic segment spans residues 89–102 (DGYALLLRRTLHNP). Residues 103-123 (VLLSLLVIGDWVTSTLSLAAA) form a helical membrane-spanning segment. At 124–151 (CSSAGITVLIDSDLAQCAHNHCGRYEAA) the chain is on the extracellular side. Residues 152–172 (VAMAFLTWFLVSLSFFFSFWL) form a helical membrane-spanning segment. Topologically, residues 173–176 (LATR) are cytoplasmic.

It belongs to the Casparian strip membrane proteins (CASP) family. In terms of assembly, homodimer and heterodimers.

The protein resides in the cell membrane. This chain is CASP-like protein 5A1, found in Selaginella moellendorffii (Spikemoss).